Reading from the N-terminus, the 215-residue chain is MTKLTARQQQVFDLIRRAIERSGFPPTRAEIAAELGFSSPNAAEEHLRALARKGVIELAAGASRGIRLLGIDDAPHQFTLPHAGLMQLSLPLVGRVAAGSPILAQEHISQHYACDPALFTSKPDYLLKVRGLSMRDAGILDGDLLAVQKRTEAKDGQIIVARLGDDVTVKRLMRRPGGLELIAENPDYENIFVKAGSAEFALEGIAVGLIRSGEL.

The segment at residues 28 to 48 is a DNA-binding region (H-T-H motif); that stretch reads RAEIAAELGFSSPNAAEEHLR. Catalysis depends on for autocatalytic cleavage activity residues S133 and K170.

Belongs to the peptidase S24 family. As to quaternary structure, homodimer.

The enzyme catalyses Hydrolysis of Ala-|-Gly bond in repressor LexA.. In terms of biological role, represses a number of genes involved in the response to DNA damage (SOS response), including recA and lexA. In the presence of single-stranded DNA, RecA interacts with LexA causing an autocatalytic cleavage which disrupts the DNA-binding part of LexA, leading to derepression of the SOS regulon and eventually DNA repair. This chain is LexA repressor, found in Burkholderia ambifaria (strain MC40-6).